The sequence spans 532 residues: MTKYIFVTGGVVSSIGKGITAASLGRLLKNRGLSVTIQKFDPYINVDPGTMSPYQHGEVYVTDDGAETDLDLGHYERFIDINLNKYSNVTTGKVYSEVIKKERRGDYLGGTVQVIPHITNELKDRVFRAARMTNSDIIITEIGGTVGDIESLPFLEAIRQIKSDVGAENVLYIHTTLIPYIKAAGEMKTKPTQHSVKELRSLGIQPNIIVVRTEQPVSQEMKDKIALFCDIKASEVIESRDEETLYNVPLSLQKQKMDDIVLEHLQLEAPQAEMTDWKNLVHRVKNLSKKVRIGLVGKYVSLQDAYLSVAEALRHAGYEHDAEIEIDWIDSEKVTKENVAEIMKDVDGILVPGGFGDRAIEGKIAAIEYARVNKVPYFGICLGMQLATVEFARNVLGLEGAHSAEIEPETKHNIIDLLPEQKNIENMGGTLRLGLYPARIKQGTKAEAAYGTTLVEERHRHRYEFNNEYREQMEEAGMIVSATSPDGRLVEVVELADHPWFVACQYHPEFISRPNRPQSLFKDFVGAALNNK.

The tract at residues 1-267 is amidoligase domain; it reads MTKYIFVTGG…DDIVLEHLQL (267 aa). Ser13 provides a ligand contact to CTP. Ser13 is a binding site for UTP. 14–19 serves as a coordination point for ATP; sequence SIGKGI. Tyr54 is a binding site for L-glutamine. Asp71 contacts ATP. The Mg(2+) site is built by Asp71 and Glu141. CTP-binding positions include 148–150, 188–193, and Lys224; these read DIE and KTKPTQ. UTP contacts are provided by residues 188–193 and Lys224; that span reads KTKPTQ. Residues 292–532 form the Glutamine amidotransferase type-1 domain; that stretch reads RIGLVGKYVS…DFVGAALNNK (241 aa). Gly354 is an L-glutamine binding site. The active-site Nucleophile; for glutamine hydrolysis is Cys381. L-glutamine contacts are provided by residues 382–385, Glu405, and Arg462; that span reads LGMQ. Active-site residues include His507 and Glu509.

This sequence belongs to the CTP synthase family. Homotetramer.

It carries out the reaction UTP + L-glutamine + ATP + H2O = CTP + L-glutamate + ADP + phosphate + 2 H(+). The enzyme catalyses L-glutamine + H2O = L-glutamate + NH4(+). The catalysed reaction is UTP + NH4(+) + ATP = CTP + ADP + phosphate + 2 H(+). Its pathway is pyrimidine metabolism; CTP biosynthesis via de novo pathway; CTP from UDP: step 2/2. Allosterically activated by GTP, when glutamine is the substrate; GTP has no effect on the reaction when ammonia is the substrate. The allosteric effector GTP functions by stabilizing the protein conformation that binds the tetrahedral intermediate(s) formed during glutamine hydrolysis. Inhibited by the product CTP, via allosteric rather than competitive inhibition. Functionally, catalyzes the ATP-dependent amination of UTP to CTP with either L-glutamine or ammonia as the source of nitrogen. Regulates intracellular CTP levels through interactions with the four ribonucleotide triphosphates. This Listeria innocua serovar 6a (strain ATCC BAA-680 / CLIP 11262) protein is CTP synthase.